The following is an 86-amino-acid chain: Small ribosomal subunit protein bS16 (86 aa).

The protein belongs to the bacterial ribosomal protein bS16 family.

This is Small ribosomal subunit protein bS16 from Mycoplasmoides gallisepticum (strain R(low / passage 15 / clone 2)) (Mycoplasma gallisepticum).